Here is a 634-residue protein sequence, read N- to C-terminus: tRNA uridine 5-carboxymethylaminomethyl modification enzyme MnmG (634 aa).

14–19 (GGGHAG) lines the FAD pocket. Position 279-293 (279-293 (GPRYCPSIEDKVVRF)) interacts with NAD(+).

The protein belongs to the MnmG family. In terms of assembly, homodimer. Heterotetramer of two MnmE and two MnmG subunits. FAD serves as cofactor.

It is found in the cytoplasm. NAD-binding protein involved in the addition of a carboxymethylaminomethyl (cmnm) group at the wobble position (U34) of certain tRNAs, forming tRNA-cmnm(5)s(2)U34. The polypeptide is tRNA uridine 5-carboxymethylaminomethyl modification enzyme MnmG (Xanthomonas campestris pv. campestris (strain 8004)).